The following is a 408-amino-acid chain: Imidazolonepropionase (408 aa).

Residues H73 and H75 each contribute to the Fe(3+) site. Zn(2+) contacts are provided by H73 and H75. 4-imidazolone-5-propanoate-binding residues include R82, Y145, and H178. Y145 contacts N-formimidoyl-L-glutamate. A Fe(3+)-binding site is contributed by H243. H243 is a binding site for Zn(2+). Q246 lines the 4-imidazolone-5-propanoate pocket. D318 serves as a coordination point for Fe(3+). D318 is a Zn(2+) binding site. N-formimidoyl-L-glutamate contacts are provided by N320 and G322. Position 323 (S323) interacts with 4-imidazolone-5-propanoate.

The protein belongs to the metallo-dependent hydrolases superfamily. HutI family. Zn(2+) is required as a cofactor. The cofactor is Fe(3+).

The protein localises to the cytoplasm. It catalyses the reaction 4-imidazolone-5-propanoate + H2O = N-formimidoyl-L-glutamate. It functions in the pathway amino-acid degradation; L-histidine degradation into L-glutamate; N-formimidoyl-L-glutamate from L-histidine: step 3/3. Its function is as follows. Catalyzes the hydrolytic cleavage of the carbon-nitrogen bond in imidazolone-5-propanoate to yield N-formimidoyl-L-glutamate. It is the third step in the universal histidine degradation pathway. The sequence is that of Imidazolonepropionase from Shewanella oneidensis (strain ATCC 700550 / JCM 31522 / CIP 106686 / LMG 19005 / NCIMB 14063 / MR-1).